Here is a 156-residue protein sequence, read N- to C-terminus: Transmembrane protein 50 homolog (156 aa).

4 helical membrane-spanning segments follow: residues 5 to 25, 45 to 65, 87 to 107, and 124 to 144; these read IMKYLPALAGIIFTAGWFLWI, IQWIYYLPGIFATLGMVMANI, VWLFISFAISFGCIGAALWIM, and PGIAITLQTSLIFLSSLLLVF.

The protein belongs to the UPF0220 family.

The protein resides in the membrane. This is Transmembrane protein 50 homolog (tmem50) from Dictyostelium discoideum (Social amoeba).